A 96-amino-acid chain; its full sequence is Large ribosomal subunit protein bL28 (96 aa).

The interval 1–23 (MSRVCELSGKAPMTGNTVSHANN) is disordered.

This sequence belongs to the bacterial ribosomal protein bL28 family.

This is Large ribosomal subunit protein bL28 from Cereibacter sphaeroides (strain ATCC 17029 / ATH 2.4.9) (Rhodobacter sphaeroides).